Reading from the N-terminus, the 505-residue chain is Probable alpha-L-arabinofuranosidase C (505 aa).

N-linked (GlcNAc...) asparagine glycosylation is found at Asn152, Asn269, and Asn438.

Belongs to the glycosyl hydrolase 51 family.

The protein localises to the secreted. The enzyme catalyses Hydrolysis of terminal non-reducing alpha-L-arabinofuranoside residues in alpha-L-arabinosides.. The protein operates within glycan metabolism; L-arabinan degradation. Its function is as follows. Alpha-L-arabinofuranosidase involved in the degradation of arabinoxylan, a major component of plant hemicellulose. Acts only on small linear 1,5-alpha-linked L-arabinofuranosyl oligosaccharides. In Aspergillus clavatus (strain ATCC 1007 / CBS 513.65 / DSM 816 / NCTC 3887 / NRRL 1 / QM 1276 / 107), this protein is Probable alpha-L-arabinofuranosidase C (abfC).